The primary structure comprises 306 residues: Pre-mRNA-splicing factor cwf26 (306 aa).

The disordered stretch occupies residues 130–152 (KAEERRKREEKSSNLDEEELRKS). A coiled-coil region spans residues 130-198 (KAEERRKREE…KEQQQGVVQV (69 aa)).

It belongs to the CWC26 family. In terms of assembly, belongs to the 40S cdc5-associated complex (or cwf complex), a spliceosome sub-complex reminiscent of a late-stage spliceosome composed of the U2, U5 and U6 snRNAs and at least brr2, cdc5, cwf2/prp3, cwf3/syf1, cwf4/syf3, cwf5/ecm2, spp42/cwf6, cwf7/spf27, cwf8, cwf9, cwf10, cwf11, cwf12, prp45/cwf13, cwf14, cwf15, cwf16, cwf17, cwf18, cwf19, cwf20, cwf21, cwf22, cwf23, cwf24, cwf25, cwf26, cyp7/cwf27, cwf28, cwf29/ist3, lea1, msl1, prp5/cwf1, prp10, prp12/sap130, prp17, prp22, sap61, sap62, sap114, sap145, slu7, smb1, smd1, smd3, smf1, smg1 and syf2.

It is found in the cytoplasm. Its subcellular location is the nucleus. Involved in mRNA splicing. This Schizosaccharomyces pombe (strain 972 / ATCC 24843) (Fission yeast) protein is Pre-mRNA-splicing factor cwf26 (cwf26).